The sequence spans 159 residues: Cyclin-dependent kinase inhibitor 1 (159 aa).

S2 bears the N-acetylserine mark. S2 participates in a covalent cross-link: Glycyl serine ester (Ser-Gly) (interchain with G-Cter in ubiquitin). The C4-type zinc finger occupies H12–C40. Residues C17–V24 are required for binding cyclins. The required for binding CDKs stretch occupies residues V53–L58. Phosphoserine; by NUAK1 is present on S78. Residues S78–E106 are disordered. Basic and acidic residues predominate over residues R82–P93. Phosphoserine; by GSK3-beta is present on S112. Residues V118 to L142 form a disordered region. S125 is modified (phosphoserine). The PIP-box K+4 motif motif lies at R135–P159. T140 bears the Phosphothreonine; by PKA, PKB/AKT1, PIM1 and PIM2 mark. A Phosphoserine; by NUAK1 modification is found at S141. The tract at residues H147 to P159 is interaction with TRIM39.

Belongs to the CDI family. In terms of assembly, interacts with HDAC1; the interaction is prevented by competitive binding of C10orf90/FATS to HDAC1 facilitating acetylation and protein stabilization of CDKN1A/p21. Interacts with MKRN1. Interacts with PSMA3. Interacts with PCNA. Component of the ternary complex, cyclin D-CDK4-CDKN1A. Interacts (via its N-terminal domain) with CDK4; the interaction promotes the assembly of the cyclin D-CDK4 complex, its nuclear translocation and promotes the cyclin D-dependent enzyme activity of CDK4. Binding to CDK2 leads to CDK2/cyclin E inactivation at the G1-S phase DNA damage checkpoint, thereby arresting cells at the G1-S transition during DNA repair. Interacts with PIM1. Interacts with STK11. Interacts with NUAK1. Interacts with DTL and TRIM39. Interacts with PKP3; the interaction sequesters CDKN1A to the cytoplasm thereby repressing its role as an inhibitor of CDK4- and CDK6-driven RB1 phosphorylation. Phosphorylation of Thr-140 or Ser-141 impairs binding to PCNA. Phosphorylation at Ser-112 by GSK3-beta enhances ubiquitination by the DCX(DTL) complex. Phosphorylation of Thr-140 by PIM2 enhances its stability and inhibits cell proliferation. Phosphorylation of Thr-140 by PIM1 results in the relocation of CDKN1A to the cytoplasm and enhanced CDKN1A protein stability. UV radiation-induced phosphorylation at Ser-78 and Ser-141 by NUAK1 leads to its degradation. In terms of processing, ubiquitinated by MKRN1; leading to polyubiquitination and 26S proteasome-dependent degradation. Ubiquitinated by the DCX(DTL) complex, also named CRL4(CDT2) complex, leading to its degradation during S phase or following UV irradiation. Ubiquitination by the DCX(DTL) complex is essential to control replication licensing and is PCNA-dependent: interacts with PCNA via its PIP-box, while the presence of the containing the 'K+4' motif in the PIP box, recruit the DCX(DTL) complex, leading to its degradation. Ubiquitination at Ser-2 leads to degradation by the proteasome pathway. Ubiquitinated by RNF114; leading to proteasomal degradation. Post-translationally, acetylation leads to protein stability. Acetylated in vitro on Lys-136, Lys-149, Lys-156 and Lys-158. Deacetylation by HDAC1 is prevented by competitive binding of C10orf90/FATS to HDAC1. Expressed in keratinocytes (at protein level).

Its subcellular location is the cytoplasm. The protein resides in the nucleus. Its function is as follows. May be involved in p53/TP53 mediated inhibition of cellular proliferation in response to DNA damage. Binds to and inhibits cyclin-dependent kinase activity, preventing phosphorylation of critical cyclin-dependent kinase substrates and blocking cell cycle progression. Functions in the nuclear localization and assembly of cyclin D-CDK4 complex and promotes its kinase activity towards RB1. At higher stoichiometric ratios, inhibits the kinase activity of the cyclin D-CDK4 complex. Inhibits DNA synthesis by DNA polymerase delta by competing with POLD3 for PCNA binding. Plays an important role in controlling cell cycle progression and DNA damage-induced G2 arrest. Functionally, plays an important role in controlling cell cycle progression and DNA damage-induced G2 arrest. Involved in p53/TP53 mediated inhibition of cellular proliferation in response to DNA damage. Also involved in p53-independent DNA damage-induced G2 arrest mediated by CREB3L1 in astrocytes and osteoblasts. Binds to and inhibits cyclin-dependent kinase activity, preventing phosphorylation of critical cyclin-dependent kinase substrates and blocking cell cycle progression. Functions in the nuclear localization and assembly of cyclin D-CDK4 complex and promotes its kinase activity towards RB1. At higher stoichiometric ratios, inhibits the kinase activity of the cyclin D-CDK4 complex. Inhibits DNA synthesis by DNA polymerase delta by competing with POLD3 for PCNA binding. Negatively regulates the CDK4- and CDK6-driven phosphorylation of RB1 in keratinocytes, thereby resulting in the release of E2F1 and subsequent transcription of E2F1-driven G1/S phase promoting genes. The sequence is that of Cyclin-dependent kinase inhibitor 1 (Cdkn1a) from Mus musculus (Mouse).